We begin with the raw amino-acid sequence, 345 residues long: Phosphoribosylformylglycinamidine cyclo-ligase (345 aa).

It belongs to the AIR synthase family.

Its subcellular location is the cytoplasm. The catalysed reaction is 2-formamido-N(1)-(5-O-phospho-beta-D-ribosyl)acetamidine + ATP = 5-amino-1-(5-phospho-beta-D-ribosyl)imidazole + ADP + phosphate + H(+). The protein operates within purine metabolism; IMP biosynthesis via de novo pathway; 5-amino-1-(5-phospho-D-ribosyl)imidazole from N(2)-formyl-N(1)-(5-phospho-D-ribosyl)glycinamide: step 2/2. This chain is Phosphoribosylformylglycinamidine cyclo-ligase, found in Shigella dysenteriae serotype 1 (strain Sd197).